We begin with the raw amino-acid sequence, 225 residues long: NAD(P)H-quinone oxidoreductase subunit K, chloroplastic (225 aa).

Cys-43, Cys-44, Cys-108, and Cys-139 together coordinate [4Fe-4S] cluster.

Belongs to the complex I 20 kDa subunit family. In terms of assembly, NDH is composed of at least 16 different subunits, 5 of which are encoded in the nucleus. It depends on [4Fe-4S] cluster as a cofactor.

It localises to the plastid. The protein resides in the chloroplast thylakoid membrane. The enzyme catalyses a plastoquinone + NADH + (n+1) H(+)(in) = a plastoquinol + NAD(+) + n H(+)(out). It catalyses the reaction a plastoquinone + NADPH + (n+1) H(+)(in) = a plastoquinol + NADP(+) + n H(+)(out). Functionally, NDH shuttles electrons from NAD(P)H:plastoquinone, via FMN and iron-sulfur (Fe-S) centers, to quinones in the photosynthetic chain and possibly in a chloroplast respiratory chain. The immediate electron acceptor for the enzyme in this species is believed to be plastoquinone. Couples the redox reaction to proton translocation, and thus conserves the redox energy in a proton gradient. The sequence is that of NAD(P)H-quinone oxidoreductase subunit K, chloroplastic from Dioscorea elephantipes (Elephant's foot yam).